Here is a 163-residue protein sequence, read N- to C-terminus: 3-hydroxyacyl-[acyl-carrier-protein] dehydratase FabZ (163 aa).

The active site involves His64.

The protein belongs to the thioester dehydratase family. FabZ subfamily.

The protein resides in the cytoplasm. It carries out the reaction a (3R)-hydroxyacyl-[ACP] = a (2E)-enoyl-[ACP] + H2O. In terms of biological role, involved in unsaturated fatty acids biosynthesis. Catalyzes the dehydration of short chain beta-hydroxyacyl-ACPs and long chain saturated and unsaturated beta-hydroxyacyl-ACPs. The chain is 3-hydroxyacyl-[acyl-carrier-protein] dehydratase FabZ from Caulobacter sp. (strain K31).